A 123-amino-acid polypeptide reads, in one-letter code: PTS system glucitol/sorbitol-specific EIIA component (123 aa).

One can recognise a PTS EIIA type-5 domain in the interval Met-1–Leu-116. His-43 functions as the Tele-phosphohistidine intermediate in the catalytic mechanism. His-43 bears the Phosphohistidine; by HPr mark.

The protein resides in the cytoplasm. In terms of biological role, the phosphoenolpyruvate-dependent sugar phosphotransferase system (sugar PTS), a major carbohydrate active transport system, catalyzes the phosphorylation of incoming sugar substrates concomitantly with their translocation across the cell membrane. The enzyme II complex composed of SrlA, SrlB and SrlE is involved in glucitol/sorbitol transport. The polypeptide is PTS system glucitol/sorbitol-specific EIIA component (srlB) (Shigella flexneri).